The following is a 265-amino-acid chain: Indole-3-glycerol phosphate synthase (265 aa).

The protein belongs to the TrpC family.

It carries out the reaction 1-(2-carboxyphenylamino)-1-deoxy-D-ribulose 5-phosphate + H(+) = (1S,2R)-1-C-(indol-3-yl)glycerol 3-phosphate + CO2 + H2O. It participates in amino-acid biosynthesis; L-tryptophan biosynthesis; L-tryptophan from chorismate: step 4/5. The sequence is that of Indole-3-glycerol phosphate synthase from Chromobacterium violaceum (strain ATCC 12472 / DSM 30191 / JCM 1249 / CCUG 213 / NBRC 12614 / NCIMB 9131 / NCTC 9757 / MK).